A 193-amino-acid chain; its full sequence is uncharacterized protein (193 aa).

The stretch at 86 to 181 forms a coiled coil; it reads TKQRELLEIL…QVEEVQAEVG (96 aa).

This is an uncharacterized protein from Streptococcus pyogenes serotype M6 (strain ATCC BAA-946 / MGAS10394).